A 282-amino-acid chain; its full sequence is Undecaprenyl-diphosphatase (282 aa).

7 helical membrane passes run 40-60 (GAAFTAIIQIGTLAAVLMYFW), 85-105 (ARMGWMIAAGTIPIVVFGLLF), 115-135 (SLYWISGALIGLALLLSLAEW), 153-173 (IGWKEALLIGLAQSIALIPGS), 193-213 (AARFSFLLSLPAVFAAGIFQL), 230-250 (LAAATFTSAVVGYLSIAFLLS), and 258-278 (TIFIIYRLLAGILLLLLLSTG).

The protein belongs to the UppP family.

It is found in the cell inner membrane. The enzyme catalyses di-trans,octa-cis-undecaprenyl diphosphate + H2O = di-trans,octa-cis-undecaprenyl phosphate + phosphate + H(+). Catalyzes the dephosphorylation of undecaprenyl diphosphate (UPP). Confers resistance to bacitracin. The sequence is that of Undecaprenyl-diphosphatase from Chlorobium phaeovibrioides (strain DSM 265 / 1930) (Prosthecochloris vibrioformis (strain DSM 265)).